Here is a 136-residue protein sequence, read N- to C-terminus: 2-hydroxyisobutanoyl-CoA mutase small subunit (136 aa).

Residues 5-133 (PIRVLLAKVG…DSIRSLVAAR (129 aa)) form the B12-binding domain. His18 provides a ligand contact to adenosylcob(III)alamin.

It belongs to the acyl-CoA mutase small subunit family. In terms of assembly, homotetramer composed of two large substrate-binding subunits (HcmA) and two small cobalamin-binding subunits (HcmB). Adenosylcob(III)alamin is required as a cofactor.

The catalysed reaction is 2-hydroxyisobutanoyl-CoA = (3S)-3-hydroxybutanoyl-CoA. Functionally, together with HcmA, catalyzes the isomerization of 2-hydroxyisobutyryl-CoA and 3-hydroxybutyryl-CoA. Is specific for 2-hydroxyisobutyryl-CoA and (S)-3-hydroxybutyryl-CoA, and shows only very low activity with (R)-3-hydroxybutyryl-CoA, isobutyryl-CoA and butyryl-CoA. In vitro, can isomerize pivalyl-CoA and isovaleryl-CoA, with much lower efficiency. Plays a central role in the degradation of substrates bearing a tert-butyl moiety, such as the fuel oxygenate methyl tert-butyl ether (MTBE) and its metabolites. This chain is 2-hydroxyisobutanoyl-CoA mutase small subunit, found in Aquincola tertiaricarbonis.